Here is a 432-residue protein sequence, read N- to C-terminus: 3-phosphoshikimate 1-carboxyvinyltransferase (432 aa).

3-phosphoshikimate is bound by residues Lys22, Ser23, and Arg27. Position 22 (Lys22) interacts with phosphoenolpyruvate. Phosphoenolpyruvate-binding residues include Gly96 and Arg127. The 3-phosphoshikimate site is built by Ser173, Ser174, Gln175, Ser201, Asp316, Asn339, and Lys343. Gln175 serves as a coordination point for phosphoenolpyruvate. Asp316 (proton acceptor) is an active-site residue. Positions 347, 391, and 416 each coordinate phosphoenolpyruvate.

The protein belongs to the EPSP synthase family. As to quaternary structure, monomer.

The protein localises to the cytoplasm. The catalysed reaction is 3-phosphoshikimate + phosphoenolpyruvate = 5-O-(1-carboxyvinyl)-3-phosphoshikimate + phosphate. It functions in the pathway metabolic intermediate biosynthesis; chorismate biosynthesis; chorismate from D-erythrose 4-phosphate and phosphoenolpyruvate: step 6/7. In terms of biological role, catalyzes the transfer of the enolpyruvyl moiety of phosphoenolpyruvate (PEP) to the 5-hydroxyl of shikimate-3-phosphate (S3P) to produce enolpyruvyl shikimate-3-phosphate and inorganic phosphate. This chain is 3-phosphoshikimate 1-carboxyvinyltransferase, found in Haemophilus influenzae (strain PittGG).